A 428-amino-acid polypeptide reads, in one-letter code: Kynureninase (428 aa).

Pyridoxal 5'-phosphate contacts are provided by residues Thr-104, Thr-105, 132–135 (FPSD), Asp-213, His-216, and Tyr-238. Lys-239 bears the N6-(pyridoxal phosphate)lysine mark. Residues Trp-267 and Thr-295 each coordinate pyridoxal 5'-phosphate.

Belongs to the kynureninase family. Homodimer. Pyridoxal 5'-phosphate serves as cofactor.

The enzyme catalyses L-kynurenine + H2O = anthranilate + L-alanine + H(+). It catalyses the reaction 3-hydroxy-L-kynurenine + H2O = 3-hydroxyanthranilate + L-alanine + H(+). The protein operates within amino-acid degradation; L-kynurenine degradation; L-alanine and anthranilate from L-kynurenine: step 1/1. It participates in cofactor biosynthesis; NAD(+) biosynthesis; quinolinate from L-kynurenine: step 2/3. Functionally, catalyzes the cleavage of L-kynurenine (L-Kyn) and L-3-hydroxykynurenine (L-3OHKyn) into anthranilic acid (AA) and 3-hydroxyanthranilic acid (3-OHAA), respectively. This is Kynureninase from Bacillus cereus (strain ATCC 14579 / DSM 31 / CCUG 7414 / JCM 2152 / NBRC 15305 / NCIMB 9373 / NCTC 2599 / NRRL B-3711).